The chain runs to 688 residues: Glycine--tRNA ligase beta subunit (688 aa).

Belongs to the class-II aminoacyl-tRNA synthetase family. As to quaternary structure, tetramer of two alpha and two beta subunits.

Its subcellular location is the cytoplasm. The catalysed reaction is tRNA(Gly) + glycine + ATP = glycyl-tRNA(Gly) + AMP + diphosphate. In Vibrio atlanticus (strain LGP32) (Vibrio splendidus (strain Mel32)), this protein is Glycine--tRNA ligase beta subunit.